The sequence spans 454 residues: Ribosomal protein uS12 methylthiotransferase RimO (454 aa).

The MTTase N-terminal domain occupies 9-124; that stretch reads PKIGFVSLGC…VMDAVHLHMP (116 aa). Residues C18, C54, C83, C155, C159, and C162 each contribute to the [4Fe-4S] cluster site. One can recognise a Radical SAM core domain in the interval 141-382; sequence LTPKHFAYLK…MLLQEEISKK (242 aa). A TRAM domain is found at 385–454; sequence QAKVGKTMRV…ADAHDLWAEA (70 aa).

This sequence belongs to the methylthiotransferase family. RimO subfamily. Requires [4Fe-4S] cluster as cofactor.

The protein resides in the cytoplasm. It carries out the reaction L-aspartate(89)-[ribosomal protein uS12]-hydrogen + (sulfur carrier)-SH + AH2 + 2 S-adenosyl-L-methionine = 3-methylsulfanyl-L-aspartate(89)-[ribosomal protein uS12]-hydrogen + (sulfur carrier)-H + 5'-deoxyadenosine + L-methionine + A + S-adenosyl-L-homocysteine + 2 H(+). Functionally, catalyzes the methylthiolation of an aspartic acid residue of ribosomal protein uS12. The polypeptide is Ribosomal protein uS12 methylthiotransferase RimO (Herminiimonas arsenicoxydans).